Here is a 96-residue protein sequence, read N- to C-terminus: Small ribosomal subunit protein bS6 (96 aa).

Belongs to the bacterial ribosomal protein bS6 family.

Its function is as follows. Binds together with bS18 to 16S ribosomal RNA. The chain is Small ribosomal subunit protein bS6 from Streptococcus equi subsp. zooepidemicus (strain MGCS10565).